The chain runs to 394 residues: Succinate--CoA ligase [ADP-forming] subunit beta (394 aa).

Residues Lys46, 53–55 (GRG), Glu99, Cys102, and Glu107 each bind ATP. Asn199 and Asp213 together coordinate Mg(2+). Residues Asn264 and 321–323 (GIV) contribute to the substrate site.

It belongs to the succinate/malate CoA ligase beta subunit family. In terms of assembly, heterotetramer of two alpha and two beta subunits. Mg(2+) is required as a cofactor.

It catalyses the reaction succinate + ATP + CoA = succinyl-CoA + ADP + phosphate. The catalysed reaction is GTP + succinate + CoA = succinyl-CoA + GDP + phosphate. The protein operates within carbohydrate metabolism; tricarboxylic acid cycle; succinate from succinyl-CoA (ligase route): step 1/1. In terms of biological role, succinyl-CoA synthetase functions in the citric acid cycle (TCA), coupling the hydrolysis of succinyl-CoA to the synthesis of either ATP or GTP and thus represents the only step of substrate-level phosphorylation in the TCA. The beta subunit provides nucleotide specificity of the enzyme and binds the substrate succinate, while the binding sites for coenzyme A and phosphate are found in the alpha subunit. This is Succinate--CoA ligase [ADP-forming] subunit beta from Haemophilus influenzae (strain PittGG).